The sequence spans 181 residues: 30 kDa heat shock protein (181 aa).

The sHSP domain maps to 33–181; sequence ASVQSFAPRF…PPTAKKITIQ (149 aa). Over residues 79 to 115 the composition is skewed to basic and acidic residues; sequence GRSEREYHSSSDDNKNDQADTENQARGESSEVAKTGE. The disordered stretch occupies residues 79 to 127; that stretch reads GRSEREYHSSSDDNKNDQADTENQARGESSEVAKTGEKQVSTKKAANKS.

It belongs to the small heat shock protein (HSP20) family.

This is 30 kDa heat shock protein (hsp30) from Emericella nidulans (strain FGSC A4 / ATCC 38163 / CBS 112.46 / NRRL 194 / M139) (Aspergillus nidulans).